Here is a 220-residue protein sequence, read N- to C-terminus: uncharacterized protein (220 aa).

The protein belongs to the DadA oxidoreductase family. It depends on FAD as a cofactor.

This is an uncharacterized protein from Halorhodospira halophila (Ectothiorhodospira halophila).